The chain runs to 270 residues: Putative postmeiotic segregation increased 2-like protein 11 (270 aa).

It belongs to the DNA mismatch repair MutL/HexB family.

The chain is Putative postmeiotic segregation increased 2-like protein 11 (PMS2P11) from Homo sapiens (Human).